A 200-amino-acid chain; its full sequence is MLLTIIDKFIQIVLGYLLSDFIMGIYHWIKDTYFSPFTPIIGKTFIWGSRLHHVRPRYVLEFTDKDLIIDSAKWTLSWIGPLFFWFGLTPFLVTMFIMISLNDVIHKYTHEIDHERPMWATILQRIGFFQSHDEHHLHHIAPHEINYCPVTPYVNIWLEKINLWRKLESFVEYLTGVKPRAKEYEFVEDEKYPAGIRFLE.

2 helical membrane-spanning segments follow: residues 9–29 (FIQI…YHWI) and 79–99 (IGPL…FIMI).

The protein belongs to the fatty acid desaturase CarF family.

Its subcellular location is the membrane. The protein is Probable fatty acid desaturase MIMI_L630 of Acanthamoeba polyphaga mimivirus (APMV).